A 208-amino-acid chain; its full sequence is LexA repressor (208 aa).

Residues 29 to 49 (VREICGAVGLSSTSTVHGHIN) constitute a DNA-binding region (H-T-H motif). Catalysis depends on for autocatalytic cleavage activity residues serine 129 and lysine 167.

This sequence belongs to the peptidase S24 family. As to quaternary structure, homodimer.

The catalysed reaction is Hydrolysis of Ala-|-Gly bond in repressor LexA.. Functionally, represses a number of genes involved in the response to DNA damage (SOS response), including recA and lexA. In the presence of single-stranded DNA, RecA interacts with LexA causing an autocatalytic cleavage which disrupts the DNA-binding part of LexA, leading to derepression of the SOS regulon and eventually DNA repair. This Limosilactobacillus fermentum (strain NBRC 3956 / LMG 18251) (Lactobacillus fermentum) protein is LexA repressor.